An 86-amino-acid polypeptide reads, in one-letter code: High affinity immunoglobulin epsilon receptor subunit gamma (86 aa).

Positions 1–18 are cleaved as a signal peptide; sequence MIPAVVLLLLLLVEQAAA. Topologically, residues 19–23 are extracellular; the sequence is LGEPQ. Residues 24-44 traverse the membrane as a helical segment; sequence LCYILDAILFLYGIVLTLLYC. Topologically, residues 45 to 86 are cytoplasmic; sequence RLKIQVRKAAIASYEKSDGVYTGLSTRNQETYETLKHEKPPQ. Positions 54-82 constitute an ITAM domain; the sequence is AIASYEKSDGVYTGLSTRNQETYETLKHE. Tyr65 bears the Phosphotyrosine mark. Residue Ser69 is modified to Phosphoserine. Tyr76 carries the post-translational modification Phosphotyrosine. Residue Thr78 is modified to Phosphothreonine.

It belongs to the CD3Z/FCER1G family. As to quaternary structure, igE Fc receptor is a tetramer of an alpha chain, a beta chain, and two disulfide linked gamma chains. Associates with FCGR1A; forms a functional signaling complex. The signaling subunit of immunoglobulin gamma (IgG) Fc receptor complex. As a homodimer or a heterodimer of CD247 and FCER1G, associates with the ligand binding subunit FCGR3A to form a functional receptor complex. Associates with CLEC6A. Interacts with CLEC4E. Interacts (via ITAM domain) with SYK (via SH2 domains); activates SYK, enabling integrin-mediated activation of neutrophils and macrophages. Interacts with CSF2RB and recruits SYK in response to IL3 stimulation; this interaction is direct. Interacts with CD300LH; the interaction may be indirect. Interacts with CD300LD. Interacts with TARM1.

The protein localises to the cell membrane. Adapter protein containing an immunoreceptor tyrosine-based activation motif (ITAM) that transduces activation signals from various immunoreceptors. As a component of the high-affinity immunoglobulin E (IgE) receptor, mediates allergic inflammatory signaling in mast cells. As a constitutive component of interleukin-3 receptor complex, selectively mediates interleukin 4/IL4 production by basophils priming T-cells toward effector T-helper 2 subset. Associates with pattern recognition receptors CLEC4D and CLEC4E to form a functional signaling complex in myeloid cells. Binding of mycobacterial trehalose 6,6'-dimycolate (TDM) to this receptor complex leads to phosphorylation of ITAM, triggering activation of SYK, CARD9 and NF-kappa-B, consequently driving maturation of antigen-presenting cells and shaping antigen-specific priming of T-cells toward effector T-helper 1 and T-helper 17 cell subtypes. May function cooperatively with other activating receptors. Functionally linked to integrin beta-2/ITGB2-mediated neutrophil activation. Also involved in integrin alpha-2/ITGA2-mediated platelet activation. The sequence is that of High affinity immunoglobulin epsilon receptor subunit gamma (FCER1G) from Macaca fascicularis (Crab-eating macaque).